The primary structure comprises 153 residues: Transcription antitermination protein NusB (153 aa).

The protein belongs to the NusB family.

Functionally, involved in transcription antitermination. Required for transcription of ribosomal RNA (rRNA) genes. Binds specifically to the boxA antiterminator sequence of the ribosomal RNA (rrn) operons. This Clostridium tetani (strain Massachusetts / E88) protein is Transcription antitermination protein NusB.